A 371-amino-acid polypeptide reads, in one-letter code: Chorismate synthase (371 aa).

Arg48 and Arg54 together coordinate NADP(+). Residues 125–127 (RSS), 238–239 (NA), Gly278, 293–297 (KPTSS), and Arg319 each bind FMN.

It belongs to the chorismate synthase family. As to quaternary structure, homotetramer. FMNH2 serves as cofactor.

It catalyses the reaction 5-O-(1-carboxyvinyl)-3-phosphoshikimate = chorismate + phosphate. Its pathway is metabolic intermediate biosynthesis; chorismate biosynthesis; chorismate from D-erythrose 4-phosphate and phosphoenolpyruvate: step 7/7. Its function is as follows. Catalyzes the anti-1,4-elimination of the C-3 phosphate and the C-6 proR hydrogen from 5-enolpyruvylshikimate-3-phosphate (EPSP) to yield chorismate, which is the branch point compound that serves as the starting substrate for the three terminal pathways of aromatic amino acid biosynthesis. This reaction introduces a second double bond into the aromatic ring system. In Polynucleobacter asymbioticus (strain DSM 18221 / CIP 109841 / QLW-P1DMWA-1) (Polynucleobacter necessarius subsp. asymbioticus), this protein is Chorismate synthase.